Reading from the N-terminus, the 360-residue chain is Tubulin-like protein CetZ2 (360 aa).

GTP contacts are provided by residues 10-14, 65-66, 106-108, E138, N165, and N183; these read QAGGK, GG, and GSG. The segment covering 334–354 has biased composition (basic and acidic residues); the sequence is EAIDKAETEPREDPKGMWHSD. Residues 334-360 are disordered; it reads EAIDKAETEPREDPKGMWHSDDLDDLL.

This sequence belongs to the CetZ family.

It is found in the cytoplasm. In terms of biological role, involved in cell shape control. This Haloferax volcanii (strain ATCC 29605 / DSM 3757 / JCM 8879 / NBRC 14742 / NCIMB 2012 / VKM B-1768 / DS2) (Halobacterium volcanii) protein is Tubulin-like protein CetZ2.